The following is a 571-amino-acid chain: Proline--tRNA ligase (571 aa).

This sequence belongs to the class-II aminoacyl-tRNA synthetase family. ProS type 1 subfamily. Homodimer.

The protein localises to the cytoplasm. It catalyses the reaction tRNA(Pro) + L-proline + ATP = L-prolyl-tRNA(Pro) + AMP + diphosphate. Functionally, catalyzes the attachment of proline to tRNA(Pro) in a two-step reaction: proline is first activated by ATP to form Pro-AMP and then transferred to the acceptor end of tRNA(Pro). As ProRS can inadvertently accommodate and process non-cognate amino acids such as alanine and cysteine, to avoid such errors it has two additional distinct editing activities against alanine. One activity is designated as 'pretransfer' editing and involves the tRNA(Pro)-independent hydrolysis of activated Ala-AMP. The other activity is designated 'posttransfer' editing and involves deacylation of mischarged Ala-tRNA(Pro). The misacylated Cys-tRNA(Pro) is not edited by ProRS. This chain is Proline--tRNA ligase, found in Vibrio vulnificus (strain CMCP6).